A 355-amino-acid chain; its full sequence is Molybdenum import ATP-binding protein ModC (355 aa).

Residues 1 to 233 (MTLIVEAKQR…PSTASDRREA (233 aa)) form the ABC transporter domain. 31–38 (GRSGSGKT) serves as a coordination point for ATP. A Mop domain is found at 291 to 355 (GLSALNILEA…AIIKTVALEA (65 aa)).

The protein belongs to the ABC transporter superfamily. Molybdate importer (TC 3.A.1.8) family. The complex is composed of two ATP-binding proteins (ModC), two transmembrane proteins (ModB) and a solute-binding protein (ModA).

The protein localises to the cell inner membrane. It carries out the reaction molybdate(out) + ATP + H2O = molybdate(in) + ADP + phosphate + H(+). Functionally, part of the ABC transporter complex ModABC involved in molybdenum import. Responsible for energy coupling to the transport system. In Rhizobium johnstonii (strain DSM 114642 / LMG 32736 / 3841) (Rhizobium leguminosarum bv. viciae), this protein is Molybdenum import ATP-binding protein ModC.